The following is a 713-amino-acid chain: Polyribonucleotide nucleotidyltransferase (713 aa).

The Mg(2+) site is built by Asp-495 and Asp-501. The KH domain maps to 562–621; that stretch reads PRLLTLKIPVDMIGLVIGPGGKTIKRIVEETGAKVDIEDDGTVVVSSIDGAKALAAKQII. Positions 631-700 constitute an S1 motif domain; sequence DKVYLGTVTR…QKGRINLTRR (70 aa).

This sequence belongs to the polyribonucleotide nucleotidyltransferase family. It depends on Mg(2+) as a cofactor.

The protein localises to the cytoplasm. The enzyme catalyses RNA(n+1) + phosphate = RNA(n) + a ribonucleoside 5'-diphosphate. Functionally, involved in mRNA degradation. Catalyzes the phosphorolysis of single-stranded polyribonucleotides processively in the 3'- to 5'-direction. This Gloeobacter violaceus (strain ATCC 29082 / PCC 7421) protein is Polyribonucleotide nucleotidyltransferase.